Here is a 439-residue protein sequence, read N- to C-terminus: Serine/threonine-protein kinase 2 (439 aa).

The 353-residue stretch at 87–439 folds into the Protein kinase domain; the sequence is NDDFYHISTG…IFSDWINGGN (353 aa). Residues 93–101 and lysine 117 each bind ATP; that span reads ISTGGYGIV. The Proton acceptor role is filled by aspartate 307.

The protein belongs to the protein kinase superfamily. Ser/Thr protein kinase family. Poxviruses subfamily. Phosphorylated in vivo. Autophosphorylated in vitro.

The protein localises to the host endoplasmic reticulum. The protein resides in the host endoplasmic reticulum-Golgi intermediate compartment. The enzyme catalyses L-seryl-[protein] + ATP = O-phospho-L-seryl-[protein] + ADP + H(+). It carries out the reaction L-threonyl-[protein] + ATP = O-phospho-L-threonyl-[protein] + ADP + H(+). In terms of biological role, essential serine-protein kinase involved in the early stage of virion morphogenesis. The sequence is that of Serine/threonine-protein kinase 2 (OPG054) from Vaccinia virus (strain Ankara) (VACV).